The following is a 132-amino-acid chain: Small ribosomal subunit protein uS8 (132 aa).

It belongs to the universal ribosomal protein uS8 family. Part of the 30S ribosomal subunit. Contacts proteins S5 and S12.

Its function is as follows. One of the primary rRNA binding proteins, it binds directly to 16S rRNA central domain where it helps coordinate assembly of the platform of the 30S subunit. The sequence is that of Small ribosomal subunit protein uS8 from Saccharopolyspora erythraea (strain ATCC 11635 / DSM 40517 / JCM 4748 / NBRC 13426 / NCIMB 8594 / NRRL 2338).